We begin with the raw amino-acid sequence, 188 residues long: CASP-like protein 4B3 (188 aa).

The tract at residues 1–21 (MSFSPASSEPHDAPAAAGSSV) is disordered. The Cytoplasmic segment spans residues 1-42 (MSFSPASSEPHDAPAAAGSSVPASRSIAERWKMEAAPIRARL). The chain crosses the membrane as a helical span at residues 43 to 63 (LLRAFAWLFSLLALVVMATDV). At 64-76 (HGRGGAQDFSTYP) the chain is on the extracellular side. A helical transmembrane segment spans residues 77–97 (EYNYCLGMSIIALLYATAQLV). The Cytoplasmic segment spans residues 98–114 (RDAHRLSSGRDLVAGRK). Residues 115–135 (AAAVVDFAGDQVVAYSLISGL) form a helical membrane-spanning segment. Over 136–156 (SAAAPVTDYMRQATDNLFNDS) the chain is Extracellular. N-linked (GlcNAc...) asparagine glycosylation occurs at Asn154. The helical transmembrane segment at 157-177 (AAAAISLAFFAFLAISLSALI) threads the bilayer. Topologically, residues 178-188 (SGYNLSLEAIV) are cytoplasmic.

This sequence belongs to the Casparian strip membrane proteins (CASP) family. Homodimer and heterodimers.

It is found in the cell membrane. This chain is CASP-like protein 4B3, found in Hordeum vulgare subsp. vulgare (Domesticated barley).